Reading from the N-terminus, the 317-residue chain is Beta-ketoacyl-[acyl-carrier-protein] synthase III (317 aa).

Active-site residues include cysteine 112 and histidine 244. Residues 245 to 249 (QANLR) form an ACP-binding region. Asparagine 274 is a catalytic residue.

Belongs to the thiolase-like superfamily. FabH family. As to quaternary structure, homodimer.

It is found in the cytoplasm. It carries out the reaction malonyl-[ACP] + acetyl-CoA + H(+) = 3-oxobutanoyl-[ACP] + CO2 + CoA. Its pathway is lipid metabolism; fatty acid biosynthesis. Its function is as follows. Catalyzes the condensation reaction of fatty acid synthesis by the addition to an acyl acceptor of two carbons from malonyl-ACP. Catalyzes the first condensation reaction which initiates fatty acid synthesis and may therefore play a role in governing the total rate of fatty acid production. Possesses both acetoacetyl-ACP synthase and acetyl transacylase activities. Its substrate specificity determines the biosynthesis of branched-chain and/or straight-chain of fatty acids. This chain is Beta-ketoacyl-[acyl-carrier-protein] synthase III, found in Pasteurella multocida (strain Pm70).